The chain runs to 419 residues: LanC-like protein 3 homolog (419 aa).

This sequence belongs to the LanC-like protein family.

The sequence is that of LanC-like protein 3 homolog from Drosophila melanogaster (Fruit fly).